The sequence spans 215 residues: MTTITPEAARLRLAQYLSPAFPTGGFAWSQGLEWAMDQGAVTRATLPQWLEDWLDHGAGWCDAVLLSLALRRGADHAELDDLARAMCPCARRLAETVEQGTAFAANVAALTGRPQSAAALPVAVGRACGCLPLPAGEIIGLYLQAQAAALISAAVRFLPLGPVEGQAMLAGLQPALLAAAARAGTADPKDLASATWGADLAAMRHETMVTRIFRS.

The protein belongs to the UreF family. As to quaternary structure, ureD, UreF and UreG form a complex that acts as a GTP-hydrolysis-dependent molecular chaperone, activating the urease apoprotein by helping to assemble the nickel containing metallocenter of UreC. The UreE protein probably delivers the nickel.

The protein resides in the cytoplasm. In terms of biological role, required for maturation of urease via the functional incorporation of the urease nickel metallocenter. In Paracoccus denitrificans (strain Pd 1222), this protein is Urease accessory protein UreF.